Consider the following 738-residue polypeptide: Protein ALEX (738 aa).

Disordered stretches follow at residues 1–105, 155–188, 237–350, 387–516, 528–578, and 611–689; these read MSPS…EEAM, REDYSPPPEESVPFQLDGEEFGGDSPPPDSASHA, TTFP…LPKP, MSGQ…LGQP, GEPG…LDPP, and GMRL…RPRI. Residues 257–273 are compositionally biased toward polar residues; the sequence is GSTTTPLSIWTAPQSQV. Positions 279–301 are enriched in basic and acidic residues; the sequence is KSREPQLRASTQRDPHLSDKQPR. The span at 387–396 shows a compositional bias: polar residues; the sequence is MSGQNQTEGQ. Composition is skewed to pro residues over residues 410 to 438, 448 to 467, and 476 to 485; these read QPPPPPPSQPPSQPLSQPPSQPPSQPPSQ, PSLPPGQSPTPKRSPQPRQP, and PGQPPSPLRS. Composition is skewed to low complexity over residues 542 to 564, 615 to 626, and 656 to 671; these read PSLPAQQLPPEQPLLPAQSLPAG, RPASARSSPPAM, and ATRSATSSPEPSEAAS.

Belongs to the ALEX family. In terms of assembly, interacts with the N-terminal region of the XLas isoforms of guanine nucleotide-binding protein G(s) subunit alpha.

Its subcellular location is the cell membrane. The protein resides in the cell projection. It is found in the ruffle. Its function is as follows. May inhibit the adenylyl cyclase-stimulating activity of guanine nucleotide-binding protein G(s) subunit alpha which is produced from the same locus in a different open reading frame. In Rattus norvegicus (Rat), this protein is Protein ALEX.